The sequence spans 341 residues: Cysteine-rich repeat secretory protein 1 (341 aa).

The first 25 residues, 1–25 (MFSLPLHQSKLIFLLSFLLIKTLNA), serve as a signal peptide directing secretion. 2 Gnk2-homologous domains span residues 28–131 (TYLL…SRKI) and 136–245 (DQGP…ATFL). 4 disulfide bridges follow: C85–C94, C97–C122, C199–C208, and C211–C236. The span at 247 to 262 (PPPPPPPPPPPPPPPQ) shows a compositional bias: pro residues. Residues 247-274 (PPPPPPPPPPPPPPPQRLYGENDTPSSD) are disordered.

The protein belongs to the cysteine-rich repeat secretory protein family.

The protein resides in the secreted. This Arabidopsis thaliana (Mouse-ear cress) protein is Cysteine-rich repeat secretory protein 1 (CRRSP1).